We begin with the raw amino-acid sequence, 191 residues long: Phosphoheptose isomerase (191 aa).

The SIS domain maps to 37–191 (ITSSLKQGGK…LILLIEQSLL (155 aa)). Residue 52–54 (NGG) coordinates substrate. The Zn(2+) site is built by His61 and Glu65. Residues Glu65, 93–94 (ND), 119–121 (STS), Ser124, and Gln172 each bind substrate. The Zn(2+) site is built by Gln172 and His180.

It belongs to the SIS family. GmhA subfamily. It depends on Zn(2+) as a cofactor.

The protein resides in the cytoplasm. It catalyses the reaction 2 D-sedoheptulose 7-phosphate = D-glycero-alpha-D-manno-heptose 7-phosphate + D-glycero-beta-D-manno-heptose 7-phosphate. The protein operates within carbohydrate biosynthesis; D-glycero-D-manno-heptose 7-phosphate biosynthesis; D-glycero-alpha-D-manno-heptose 7-phosphate and D-glycero-beta-D-manno-heptose 7-phosphate from sedoheptulose 7-phosphate: step 1/1. Catalyzes the isomerization of sedoheptulose 7-phosphate in D-glycero-D-manno-heptose 7-phosphate. The polypeptide is Phosphoheptose isomerase (Cytophaga hutchinsonii (strain ATCC 33406 / DSM 1761 / CIP 103989 / NBRC 15051 / NCIMB 9469 / D465)).